Here is a 63-residue protein sequence, read N- to C-terminus: Large ribosomal subunit protein bL32 (63 aa).

The interval 1-23 (MATPKAKVSKSRRDKRRAQFTAR) is disordered. Positions 7–18 (KVSKSRRDKRRA) are enriched in basic residues.

This sequence belongs to the bacterial ribosomal protein bL32 family.

This chain is Large ribosomal subunit protein bL32, found in Chlorobium phaeobacteroides (strain BS1).